The following is a 71-amino-acid chain: Small ribosomal subunit protein bS21 (71 aa).

A disordered region spans residues Thr43–Tyr71. Over residues Lys46–Lys59 the composition is skewed to basic residues. The segment covering Leu60–Tyr71 has biased composition (basic and acidic residues).

It belongs to the bacterial ribosomal protein bS21 family.

This is Small ribosomal subunit protein bS21 from Edwardsiella ictaluri (strain 93-146).